Reading from the N-terminus, the 557-residue chain is Laccase-11 (557 aa).

Positions 1 to 23 (MKMGFLFLFCYLLAFLGYSPVDA) are cleaved as a signal peptide. Plastocyanin-like domains are found at residues 31–147 (DVQV…PAPG) and 158–308 (ESNI…YKGV). N-linked (GlcNAc...) asparagine glycans are attached at residues N36, N69, and N77. H81 and H83 together coordinate Cu cation. N-linked (GlcNAc...) asparagine glycosylation is present at N115. Cu cation is bound by residues H126 and H128. Residues N240, N296, N323, N371, N381, N398, N416, and N440 are each glycosylated (N-linked (GlcNAc...) asparagine). The Plastocyanin-like 3 domain maps to 406–541 (DFPDRPPKAF…KMAFVVENGE (136 aa)). Cu cation-binding residues include H458, H461, H463, H520, C521, H522, and H526.

The protein belongs to the multicopper oxidase family. The cofactor is Cu cation. As to expression, ubiquitous and constitutive.

The protein resides in the secreted. It localises to the extracellular space. The protein localises to the apoplast. It carries out the reaction 4 hydroquinone + O2 = 4 benzosemiquinone + 2 H2O. Functionally, lignin degradation and detoxification of lignin-derived products. The polypeptide is Laccase-11 (LAC11) (Arabidopsis thaliana (Mouse-ear cress)).